A 418-amino-acid chain; its full sequence is Gamma-glutamyl phosphate reductase (418 aa).

This sequence belongs to the gamma-glutamyl phosphate reductase family.

The protein localises to the cytoplasm. It carries out the reaction L-glutamate 5-semialdehyde + phosphate + NADP(+) = L-glutamyl 5-phosphate + NADPH + H(+). It participates in amino-acid biosynthesis; L-proline biosynthesis; L-glutamate 5-semialdehyde from L-glutamate: step 2/2. Catalyzes the NADPH-dependent reduction of L-glutamate 5-phosphate into L-glutamate 5-semialdehyde and phosphate. The product spontaneously undergoes cyclization to form 1-pyrroline-5-carboxylate. This chain is Gamma-glutamyl phosphate reductase, found in Desulfotalea psychrophila (strain LSv54 / DSM 12343).